The primary structure comprises 227 residues: Urease accessory protein UreF (227 aa).

The protein belongs to the UreF family. UreD, UreF and UreG form a complex that acts as a GTP-hydrolysis-dependent molecular chaperone, activating the urease apoprotein by helping to assemble the nickel containing metallocenter of UreC. The UreE protein probably delivers the nickel.

The protein resides in the cytoplasm. Required for maturation of urease via the functional incorporation of the urease nickel metallocenter. The chain is Urease accessory protein UreF from Blochmanniella floridana.